The following is a 336-amino-acid chain: Nicotinate-nucleotide--dimethylbenzimidazole phosphoribosyltransferase (336 aa).

The Proton acceptor role is filled by E304.

Belongs to the CobT family.

The enzyme catalyses 5,6-dimethylbenzimidazole + nicotinate beta-D-ribonucleotide = alpha-ribazole 5'-phosphate + nicotinate + H(+). It functions in the pathway nucleoside biosynthesis; alpha-ribazole biosynthesis; alpha-ribazole from 5,6-dimethylbenzimidazole: step 1/2. Functionally, catalyzes the synthesis of alpha-ribazole-5'-phosphate from nicotinate mononucleotide (NAMN) and 5,6-dimethylbenzimidazole (DMB). The chain is Nicotinate-nucleotide--dimethylbenzimidazole phosphoribosyltransferase from Ruegeria sp. (strain TM1040) (Silicibacter sp.).